Here is an 81-residue protein sequence, read N- to C-terminus: MDSTVAAASVIAAALAVGLGAIGPGIGQGNASGQAVSGIARQPEAEGKIRGTLLLTLAFMESLTIYGLVIALVLLFANPFA.

2 helical membrane passes run 6–26 and 57–77; these read AAAS…GPGI and LAFM…LLFA.

This sequence belongs to the ATPase C chain family. In terms of assembly, F-type ATPases have 2 components, F(1) - the catalytic core - and F(0) - the membrane proton channel. F(1) has five subunits: alpha(3), beta(3), gamma(1), delta(1), epsilon(1). F(0) has four main subunits: a(1), b(1), b'(1) and c(10-14). The alpha and beta chains form an alternating ring which encloses part of the gamma chain. F(1) is attached to F(0) by a central stalk formed by the gamma and epsilon chains, while a peripheral stalk is formed by the delta, b and b' chains.

The protein resides in the cellular thylakoid membrane. Its function is as follows. F(1)F(0) ATP synthase produces ATP from ADP in the presence of a proton or sodium gradient. F-type ATPases consist of two structural domains, F(1) containing the extramembraneous catalytic core and F(0) containing the membrane proton channel, linked together by a central stalk and a peripheral stalk. During catalysis, ATP synthesis in the catalytic domain of F(1) is coupled via a rotary mechanism of the central stalk subunits to proton translocation. In terms of biological role, key component of the F(0) channel; it plays a direct role in translocation across the membrane. A homomeric c-ring of between 10-14 subunits forms the central stalk rotor element with the F(1) delta and epsilon subunits. This Synechocystis sp. (strain ATCC 27184 / PCC 6803 / Kazusa) protein is ATP synthase subunit c.